Reading from the N-terminus, the 120-residue chain is Thiosulfate sulfurtransferase 16, chloroplastic (120 aa).

The region spanning 20-120 (LLAGHRYLDV…WAKNGLPTKA (101 aa)) is the Rhodanese domain. The active-site Cysteine persulfide intermediate is C80. Position 85 (R85) interacts with substrate.

As to quaternary structure, monomer.

The protein resides in the plastid. Its subcellular location is the chloroplast. The catalysed reaction is thiosulfate + hydrogen cyanide = thiocyanate + sulfite + 2 H(+). Its function is as follows. Thought to act during the early stages of leaf senescence. Catalyzes the transfer of a sulfur ion from a donor to cyanide or to other thiol compounds. Substrate preference is thiosulfate &gt; 3-mercaptopyruvate. This is Thiosulfate sulfurtransferase 16, chloroplastic (STR16) from Arabidopsis thaliana (Mouse-ear cress).